The chain runs to 903 residues: Dual serine/threonine and tyrosine protein kinase (903 aa).

The stretch at 382 to 414 forms a coiled coil; it reads ANRKQEEMKEMIVETLESMKEQLLEDAANLEFT. In terms of domain architecture, Protein kinase spans 627–881; that stretch reads PKLGRELGRG…PLLGIVQPSL (255 aa). Residues 633–641 and Lys656 each bind ATP; that span reads LGRGQYGVV. The active-site Proton acceptor is Asp752.

It belongs to the protein kinase superfamily. Ser/Thr protein kinase family.

It localises to the cytoplasm. The protein resides in the cell membrane. Its subcellular location is the apical cell membrane. It is found in the basolateral cell membrane. The protein localises to the cell junction. The catalysed reaction is L-seryl-[protein] + ATP = O-phospho-L-seryl-[protein] + ADP + H(+). The enzyme catalyses L-threonyl-[protein] + ATP = O-phospho-L-threonyl-[protein] + ADP + H(+). It catalyses the reaction L-tyrosyl-[protein] + ATP = O-phospho-L-tyrosyl-[protein] + ADP + H(+). May act as a positive regulator of ERK phosphorylation downstream of fibroblast growth factor-receptor activation. May induce both caspase-dependent apoptosis and caspase-independent cell death. May play a role in the embryonic development. The polypeptide is Dual serine/threonine and tyrosine protein kinase (Pimephales promelas (Fathead minnow)).